The chain runs to 363 residues: Spindle pole body component SPC42 (363 aa).

Residues 60–137 (EFINKAVQQN…ANSTFKEMRF (78 aa)) adopt a coiled-coil conformation. The interval 160–184 (PKHRAPDATGNPRTTNKVSNTSDQD) is disordered. The segment covering 170–182 (NPRTTNKVSNTSD) has biased composition (polar residues). Phosphoserine is present on residues S213, S217, S284, and S329. The stretch at 249-298 (DIMMYESAELKRVEEEIEELKRKILVRKKHDLRKLSLNNQLQELQSMMDG) forms a coiled coil. The segment at 310–363 (HNHATHRHSSQSSRDYSPSSDACLECSNDLYEKNRVKPENNMSETFATPTPNNR) is disordered. The segment covering 319–329 (SQSSRDYSPSS) has biased composition (low complexity). A compositionally biased stretch (polar residues) spans 349–363 (NNMSETFATPTPNNR).

It belongs to the SPC42 family. Component of the SPC110 complex containing at least CMD1, SPC29, SPC42 and SCP110.

The protein resides in the nucleus. It localises to the cytoplasm. The protein localises to the cytoskeleton. Its subcellular location is the microtubule organizing center. It is found in the spindle pole body. Its function is as follows. Forms a polymeric layer at the periphery of the spindle pole body (SPB) central plaque which has an essential function during SPB duplication and may facilitate attachment of the SPB to the nuclear membrane. In Saccharomyces cerevisiae (strain ATCC 204508 / S288c) (Baker's yeast), this protein is Spindle pole body component SPC42 (SPC42).